The chain runs to 100 residues: Integration host factor subunit alpha (100 aa).

The protein belongs to the bacterial histone-like protein family. As to quaternary structure, heterodimer of an alpha and a beta chain.

In terms of biological role, this protein is one of the two subunits of integration host factor, a specific DNA-binding protein that functions in genetic recombination as well as in transcriptional and translational control. The chain is Integration host factor subunit alpha from Cereibacter sphaeroides (strain ATCC 17023 / DSM 158 / JCM 6121 / CCUG 31486 / LMG 2827 / NBRC 12203 / NCIMB 8253 / ATH 2.4.1.) (Rhodobacter sphaeroides).